The chain runs to 141 residues: Hemoglobin subunit alpha-1/2 (141 aa).

The region spanning 1-141 (VLSPADKKNV…VSTVLTSKYR (141 aa)) is the Globin domain. At serine 3 the chain carries Phosphoserine. Lysine 7 and lysine 11 each carry N6-succinyllysine. Lysine 16 bears the N6-acetyllysine; alternate mark. An N6-succinyllysine; alternate modification is found at lysine 16. At tyrosine 24 the chain carries Phosphotyrosine. At serine 35 the chain carries Phosphoserine. Lysine 40 bears the N6-succinyllysine mark. Residue serine 49 is modified to Phosphoserine. Residue histidine 58 participates in O2 binding. Histidine 87 is a binding site for heme b. Serine 102 carries the post-translational modification Phosphoserine. Residue threonine 108 is modified to Phosphothreonine. Serine 124 and serine 131 each carry phosphoserine. Phosphothreonine occurs at positions 134 and 137. Position 138 is a phosphoserine (serine 138).

Belongs to the globin family. As to quaternary structure, heterotetramer of two alpha chains and two beta chains. In terms of tissue distribution, red blood cells.

Its function is as follows. Involved in oxygen transport from the lung to the various peripheral tissues. This chain is Hemoglobin subunit alpha-1/2, found in Mandrillus sphinx (Mandrill).